The sequence spans 607 residues: Dolichyl-diphosphooligosaccharide--protein glycosyltransferase subunit 1 (607 aa).

Residues 1-24 (MEVPTARLLLLLLLGAWAPAPESA) form the signal peptide. At 25–434 (SPEAPLLVNE…VVHYTFNKVL (410 aa)) the chain is on the lumenal side. N6-acetyllysine is present on K187. Residue N299 is glycosylated (N-linked (GlcNAc...) asparagine). A helical membrane pass occupies residues 435–455 (MLQEPLLVVAAFYILFFTVII). Over 456–607 (YVRLDFSITK…TKIDHILDAL (152 aa)) the chain is Cytoplasmic. The residue at position 538 (K538) is an N6-acetyllysine; alternate. K538 is covalently cross-linked (Glycyl lysine isopeptide (Lys-Gly) (interchain with G-Cter in SUMO2); alternate).

It belongs to the OST1 family. In terms of assembly, component of the oligosaccharyltransferase (OST) complex. OST exists in two different complex forms which contain common core subunits RPN1, RPN2, OST48, OST4, DAD1 and TMEM258, either STT3A or STT3B as catalytic subunits, and form-specific accessory subunits. STT3A complex assembly occurs through the formation of 3 subcomplexes. Subcomplex 1 contains RPN1 and TMEM258, subcomplex 2 contains the STT3A-specific subunits STT3A, DC2/OSTC, and KCP2 as well as the core subunit OST4, and subcomplex 3 contains RPN2, DAD1, and OST48. The STT3A complex can form stable complexes with the Sec61 complex or with both the Sec61 and TRAP complexes. Interacts with TMEM35A/NACHO. Ubiquitinated by the ECS(ASB11) complex. In terms of processing, ufmylated by UFL1 in response to endoplasmic reticulum stress, promoting reticulophagy of endoplasmic reticulum sheets.

It is found in the endoplasmic reticulum membrane. Its pathway is protein modification; protein glycosylation. Its function is as follows. Subunit of the oligosaccharyl transferase (OST) complex that catalyzes the initial transfer of a defined glycan (Glc(3)Man(9)GlcNAc(2) in eukaryotes) from the lipid carrier dolichol-pyrophosphate to an asparagine residue within an Asn-X-Ser/Thr consensus motif in nascent polypeptide chains, the first step in protein N-glycosylation. N-glycosylation occurs cotranslationally and the complex associates with the Sec61 complex at the channel-forming translocon complex that mediates protein translocation across the endoplasmic reticulum (ER). All subunits are required for a maximal enzyme activity. The chain is Dolichyl-diphosphooligosaccharide--protein glycosyltransferase subunit 1 from Canis lupus familiaris (Dog).